A 155-amino-acid polypeptide reads, in one-letter code: RNA pyrophosphohydrolase (155 aa).

Positions 5–149 (EYRSGVGIML…KKPLYEKILS (145 aa)) constitute a Nudix hydrolase domain. The Nudix box signature appears at 39–60 (GGLEAKETPEVGVLRELEEETG).

The protein belongs to the Nudix hydrolase family. RppH subfamily. It depends on a divalent metal cation as a cofactor.

Functionally, accelerates the degradation of transcripts by removing pyrophosphate from the 5'-end of triphosphorylated RNA, leading to a more labile monophosphorylated state that can stimulate subsequent ribonuclease cleavage. The chain is RNA pyrophosphohydrolase from Zymomonas mobilis subsp. mobilis (strain ATCC 31821 / ZM4 / CP4).